The chain runs to 532 residues: Tyrosinase (532 aa).

The N-terminal stretch at 1-22 (MESTTVLLAASTLLLVLHASYG) is a signal peptide. Over 23–479 (QFPRACSTAQ…LEQARQIWQW (457 aa)) the chain is Lumenal, melanosome. 3 N-linked (GlcNAc...) asparagine glycosylation sites follow: N90, N115, and N165. Cu cation is bound by residues H184, H206, and H215. N-linked (GlcNAc...) asparagine glycans are attached at residues N234 and N341. H367 and H371 together coordinate Cu cation. The N-linked (GlcNAc...) asparagine glycan is linked to N375. H394 is a Cu cation binding site. A helical membrane pass occupies residues 480–500 (LLGAAVVGGLVTAVIATIISL). Residues 501 to 532 (TCRRKRRTKTSEETRPLLMEAEDYHATYQSNL) are Cytoplasmic-facing.

This sequence belongs to the tyrosinase family. In terms of assembly, active tyrosinase has been found as a homodimer and homotetramer. Cu(2+) is required as a cofactor. In terms of tissue distribution, frog skin.

It is found in the melanosome membrane. It catalyses the reaction 2 L-dopa + O2 = 2 L-dopaquinone + 2 H2O. It carries out the reaction L-tyrosine + O2 = L-dopaquinone + H2O. Activated by trypsin, chymotrypsin and subtilisin. Activated by alpha-chymotrypsin, thermolysin and Pronase. Inhibited by its product L-DOPA and tyrosine. This is a copper-containing oxidase that functions in the formation of pigments such as melanins and other polyphenolic compounds. Catalyzes the initial and rate limiting step in the cascade of reactions leading to melanin production from tyrosine. In addition to hydroxylating tyrosine to DOPA (3,4-dihydroxyphenylalanine), also catalyzes the oxidation of DOPA to DOPA-quinone. This chain is Tyrosinase, found in Pelophylax lessonae (Pool frog).